The chain runs to 264 residues: Phosphate import ATP-binding protein PstB (264 aa).

Positions 11-250 constitute an ABC transporter domain; it reads LKAEALSVYY…DTTEKIFDSP (240 aa). 43 to 50 contacts ATP; sequence GPSGCGKS.

This sequence belongs to the ABC transporter superfamily. Phosphate importer (TC 3.A.1.7) family. The complex is composed of two ATP-binding proteins (PstB), two transmembrane proteins (PstC and PstA) and a solute-binding protein (PstS).

Its subcellular location is the cell inner membrane. The catalysed reaction is phosphate(out) + ATP + H2O = ADP + 2 phosphate(in) + H(+). Functionally, part of the ABC transporter complex PstSACB involved in phosphate import. Responsible for energy coupling to the transport system. The protein is Phosphate import ATP-binding protein PstB of Synechococcus sp. (strain ATCC 27144 / PCC 6301 / SAUG 1402/1) (Anacystis nidulans).